A 96-amino-acid polypeptide reads, in one-letter code: Co-chaperonin GroES (96 aa).

This sequence belongs to the GroES chaperonin family. Heptamer of 7 subunits arranged in a ring. Interacts with the chaperonin GroEL.

It is found in the cytoplasm. In terms of biological role, together with the chaperonin GroEL, plays an essential role in assisting protein folding. The GroEL-GroES system forms a nano-cage that allows encapsulation of the non-native substrate proteins and provides a physical environment optimized to promote and accelerate protein folding. GroES binds to the apical surface of the GroEL ring, thereby capping the opening of the GroEL channel. This Actinobacillus succinogenes (strain ATCC 55618 / DSM 22257 / CCUG 43843 / 130Z) protein is Co-chaperonin GroES.